The sequence spans 109 residues: Polyprenyl transferase subC (109 aa).

The next 2 helical transmembrane spans lie at 39–59 (LFCV…NDWI) and 84–104 (QAFV…HVML).

It belongs to the UbiA prenyltransferase family. Mg(2+) serves as cofactor.

It localises to the membrane. The protein operates within secondary metabolite biosynthesis; terpenoid biosynthesis. Its function is as follows. Polyprenyl transferase; part of the gene cluster that mediates the biosynthesis of the immunosuppressants subglutinols, meroterpenoids consisting of an alpha-pyrone (4-hydroxy-5,6-dimethyl-2-pyrone) moiety attached to a decalin core fused to a five-membered cyclic ether carrying a prenylside chain. The first step of the pathway is the synthesis of the alpha-pyrone moiety by the polyketide synthase subA via condensation of one acetyl-CoA starter unit with 3 malonyl-CoA units and 2 methylations. The alpha-pyrone is then combined with geranylgeranyl pyrophosphate (GGPP) formed by the GGPP synthase subD through the action of the prenyltransferase subC to yield a linear alpha-pyrone diterpenoid. Subsequent steps in the subglutinol biosynthetic pathway involve the decalin core formation, which is thought to be initiated by the epoxidation of the C10-C11 olefin by the FAD-dependent oxidoreductase subE. The following cyclization cascade would be catalyzed by the terpene cyclase subB. Lastly, the FAD-dependent dehydrogenase subF probably catalyzes the five-membered cyclic ether formation to complete the formation of subglutinol A. Subsequent redox reactions appear to give rise to subglutinol C and D, however, it remains unclear which enzymes are responsible for these transformations. SubD may have secondary function in the conversion of the identified subglutinols to subglutinol analog 45, which seems to be the major product of the cluster. The polypeptide is Polyprenyl transferase subC (Metarhizium robertsii (strain ARSEF 23 / ATCC MYA-3075) (Metarhizium anisopliae (strain ARSEF 23))).